The following is a 229-amino-acid chain: MTKKKTFIPLLYLTSIVFLPWCISFTFKKSLESWFIDWWNTRQSEIFLNDIKEKSILKKFIEFEELFFLDDMLKECPETHLQNLRTGIYKETIQLIKTHNEDRMNTILHFSTNIICFFILSGYSILGNQELVLINSLVREFIYNLSDTIKAFSILLLTDLCIGFHSTHGWELVIGFVYKDFGFAQNDQIISGLVSTFPVILDTILKYWIFRYLNRVSPSLVVIYHSMND.

Transmembrane regions (helical) follow at residues 7-27 (FIPL…SFTF), 107-127 (ILHF…SILG), 154-174 (ILLL…ELVI), and 189-209 (IISG…KYWI).

It belongs to the CemA family.

It is found in the plastid. It localises to the chloroplast inner membrane. It catalyses the reaction K(+)(in) + H(+)(out) = K(+)(out) + H(+)(in). Contributes to K(+)/H(+) antiport activity by supporting proton efflux to control proton extrusion and homeostasis in chloroplasts in a light-dependent manner to modulate photosynthesis. Prevents excessive induction of non-photochemical quenching (NPQ) under continuous-light conditions. Indirectly promotes efficient inorganic carbon uptake into chloroplasts. This chain is Potassium/proton antiporter CemA, found in Glycine max (Soybean).